The following is a 208-amino-acid chain: MAKGILGTKLGMTQIFNESGEVVPVTVVSVEGNVVLQLKTMEVDGYEAVQLGFGDIKEGRQNKPQKGHAAKASATPKRFIKEIRTSVTDFEIGQEIKADTFAAGEMVDVTGTSKGKGFAGAIKRHNQSRGPMAHGSRYHRRPGSMGPVAPNRVFKGKLLPGRMGGEQVTVQNLEIVKVDVERGLLLVKGAIPGARKSQVVVKTAVKGN.

The disordered stretch occupies residues 126-150 (NQSRGPMAHGSRYHRRPGSMGPVAP).

Belongs to the universal ribosomal protein uL3 family. In terms of assembly, part of the 50S ribosomal subunit. Forms a cluster with proteins L14 and L19.

In terms of biological role, one of the primary rRNA binding proteins, it binds directly near the 3'-end of the 23S rRNA, where it nucleates assembly of the 50S subunit. The chain is Large ribosomal subunit protein uL3 from Exiguobacterium sibiricum (strain DSM 17290 / CCUG 55495 / CIP 109462 / JCM 13490 / 255-15).